The chain runs to 87 residues: Small ribosomal subunit protein bS20 (87 aa).

The interval 67–87 (HKNNGSRKASRLDAYVQSKQQ) is disordered.

It belongs to the bacterial ribosomal protein bS20 family.

Functionally, binds directly to 16S ribosomal RNA. The polypeptide is Small ribosomal subunit protein bS20 (Metamycoplasma arthritidis (strain 158L3-1) (Mycoplasma arthritidis)).